A 343-amino-acid chain; its full sequence is MASNSSNGTTTTKPPPMPSPLRNSKFFQSNMRILVTGGAGFIGSHLVDKLMQNEKNEVIVADNYFTGSKDNLKKWIGHPRFELIRHDVTEPLFVEVDQIYHLACPASPIFYKYNPVKTIKTNVIGTLNMLGLAKRVGARILLTSTSEVYGDPLVHPQTESYWGNVNPIGVRSCYDEGKRVAETLMFDYHRQHGIEIRIARIFNTYGPRMNIDDGRVVSNFIAQALRGEALTVQKPGTQTRSFCYVSDMVEGLMRLMEGDQTGPINIGNPGEFTMVELAETVKELIKPDVEIKMVENTPDDPRQRKPDISKAKEVLGWEPKVKLREGLPLMEEDFRLRLGVPKK.

A disordered region spans residues 1-22 (MASNSSNGTTTTKPPPMPSPLR). Position 2 is an N-acetylalanine (A2). Residue 62–87 (DNYFTGSKDNLKKWIGHPRFELIRHD) coordinates NAD(+). R171 contacts substrate. Y174 serves as the catalytic Proton acceptor. 174–178 (YDEGK) is an NAD(+) binding site. N203 contributes to the substrate binding site. R215 is an NAD(+) binding site. Substrate is bound by residues 216–220 (VVSNF), 233–240 (QKPGTQTR), and 300–304 (DPRQR).

This sequence belongs to the NAD(P)-dependent epimerase/dehydratase family. UDP-glucuronic acid decarboxylase subfamily. NAD(+) serves as cofactor.

Its subcellular location is the cytoplasm. It catalyses the reaction UDP-alpha-D-glucuronate + H(+) = UDP-alpha-D-xylose + CO2. Its pathway is nucleotide-sugar biosynthesis; UDP-alpha-D-xylose biosynthesis; UDP-alpha-D-xylose from UDP-alpha-D-glucuronate: step 1/1. In terms of biological role, catalyzes the NAD-dependent decarboxylation of UDP-glucuronic acid to UDP-xylose. Necessary for the biosynthesis of the core tetrasaccharide in glycosaminoglycan biosynthesis. This is UDP-glucuronic acid decarboxylase 6 (UXS6) from Arabidopsis thaliana (Mouse-ear cress).